We begin with the raw amino-acid sequence, 339 residues long: 2-keto-3-deoxygluconate permease (339 aa).

Helical transmembrane passes span 10-30 (IPGG…TFAP), 42-62 (GLIS…GASI), 77-97 (LVVT…RILP), 100-120 (GVEV…AMDM), 141-161 (AFVL…LGTA), 163-183 (IASF…VGFA), 199-219 (VQTL…LSVI), 224-244 (LLGV…LIVA), 254-274 (TAGI…VLIA), and 289-309 (TLVA…TAMW). The segment at 315-339 (GGDGTVPKEDAVEEKAEQQRRRIIK) is disordered. Basic and acidic residues predominate over residues 320 to 339 (VPKEDAVEEKAEQQRRRIIK).

This sequence belongs to the KdgT transporter family.

The protein localises to the cell inner membrane. The catalysed reaction is 2-dehydro-3-deoxy-D-gluconate(in) + H(+)(in) = 2-dehydro-3-deoxy-D-gluconate(out) + H(+)(out). With respect to regulation, uptake is inhibited by the protonophore uncouplers carbonyl cyanide m-chlorophenylhydrazone (CCCP) and 2,4-dinitrophenol, and by NaN(3). Catalyzes the proton-dependent uptake of 2-keto-3-deoxygluconate (KDG) into the cell. Can also mediate the uptake of glucuronate with a low affinity, and may mediate the uptake of 5-keto-4-deoxyuronate (DKI) and 2,5-diketo-3-deoxygluconate (DKII), which are intermediates in pectin degradation. This Dickeya chrysanthemi (Pectobacterium chrysanthemi) protein is 2-keto-3-deoxygluconate permease.